The primary structure comprises 237 residues: Ribonuclease PH (237 aa).

Phosphate contacts are provided by residues arginine 86 and 124–126 (GTR).

It belongs to the RNase PH family. In terms of assembly, homohexameric ring arranged as a trimer of dimers.

It carries out the reaction tRNA(n+1) + phosphate = tRNA(n) + a ribonucleoside 5'-diphosphate. Its function is as follows. Phosphorolytic 3'-5' exoribonuclease that plays an important role in tRNA 3'-end maturation. Removes nucleotide residues following the 3'-CCA terminus of tRNAs; can also add nucleotides to the ends of RNA molecules by using nucleoside diphosphates as substrates, but this may not be physiologically important. Probably plays a role in initiation of 16S rRNA degradation (leading to ribosome degradation) during starvation. The polypeptide is Ribonuclease PH (Bradyrhizobium sp. (strain ORS 278)).